The following is a 443-amino-acid chain: ATP-dependent protease ATPase subunit HslU (443 aa).

ATP-binding positions include Ile-18, 60 to 65 (GVGKTE), Asp-256, Glu-321, and Arg-393.

This sequence belongs to the ClpX chaperone family. HslU subfamily. As to quaternary structure, a double ring-shaped homohexamer of HslV is capped on each side by a ring-shaped HslU homohexamer. The assembly of the HslU/HslV complex is dependent on binding of ATP.

The protein localises to the cytoplasm. In terms of biological role, ATPase subunit of a proteasome-like degradation complex; this subunit has chaperone activity. The binding of ATP and its subsequent hydrolysis by HslU are essential for unfolding of protein substrates subsequently hydrolyzed by HslV. HslU recognizes the N-terminal part of its protein substrates and unfolds these before they are guided to HslV for hydrolysis. The chain is ATP-dependent protease ATPase subunit HslU from Nitrosospira multiformis (strain ATCC 25196 / NCIMB 11849 / C 71).